The following is a 159-amino-acid chain: NAD(P)H-quinone oxidoreductase subunit J, chloroplastic (159 aa).

It belongs to the complex I 30 kDa subunit family. NDH is composed of at least 16 different subunits, 5 of which are encoded in the nucleus.

The protein localises to the plastid. The protein resides in the chloroplast thylakoid membrane. It carries out the reaction a plastoquinone + NADH + (n+1) H(+)(in) = a plastoquinol + NAD(+) + n H(+)(out). It catalyses the reaction a plastoquinone + NADPH + (n+1) H(+)(in) = a plastoquinol + NADP(+) + n H(+)(out). In terms of biological role, NDH shuttles electrons from NAD(P)H:plastoquinone, via FMN and iron-sulfur (Fe-S) centers, to quinones in the photosynthetic chain and possibly in a chloroplast respiratory chain. The immediate electron acceptor for the enzyme in this species is believed to be plastoquinone. Couples the redox reaction to proton translocation, and thus conserves the redox energy in a proton gradient. The polypeptide is NAD(P)H-quinone oxidoreductase subunit J, chloroplastic (Oryza nivara (Indian wild rice)).